The chain runs to 456 residues: UPF0496 protein 4 (456 aa).

A helical transmembrane segment spans residues 205 to 221; the sequence is SVTVFVCSIFVAVLSGS.

The protein belongs to the ROH1 family.

The protein resides in the membrane. The polypeptide is UPF0496 protein 4 (Oryza sativa subsp. indica (Rice)).